Reading from the N-terminus, the 118-residue chain is Small ribosomal subunit protein uS13 (118 aa).

The disordered stretch occupies residues 94–118 (SLPVRGQRSKTNARTRKGPRKAIKK).

It belongs to the universal ribosomal protein uS13 family. Part of the 30S ribosomal subunit. Forms a loose heterodimer with protein S19. Forms two bridges to the 50S subunit in the 70S ribosome.

In terms of biological role, located at the top of the head of the 30S subunit, it contacts several helices of the 16S rRNA. In the 70S ribosome it contacts the 23S rRNA (bridge B1a) and protein L5 of the 50S subunit (bridge B1b), connecting the 2 subunits; these bridges are implicated in subunit movement. Contacts the tRNAs in the A and P-sites. The sequence is that of Small ribosomal subunit protein uS13 from Psychromonas ingrahamii (strain DSM 17664 / CCUG 51855 / 37).